Here is a 298-residue protein sequence, read N- to C-terminus: GTPase Era (298 aa).

The Era-type G domain maps to 4 to 171 (KSGFVSVIGR…LKEALDYIPE (168 aa)). The segment at 12-19 (GRPNVGKS) is G1. 12–19 (GRPNVGKS) provides a ligand contact to GTP. The interval 38–42 (QTTRN) is G2. Positions 59 to 62 (DTPG) are G3. Residues 59–63 (DTPGI) and 121–124 (NKVD) each bind GTP. The segment at 121 to 124 (NKVD) is G4. A G5 region spans residues 150 to 152 (ISA). The 78-residue stretch at 202–279 (LDDEVPHGVG…FLELWVKVKP (78 aa)) folds into the KH type-2 domain.

Belongs to the TRAFAC class TrmE-Era-EngA-EngB-Septin-like GTPase superfamily. Era GTPase family. In terms of assembly, monomer.

It is found in the cytoplasm. It localises to the cell membrane. An essential GTPase that binds both GDP and GTP, with rapid nucleotide exchange. Plays a role in 16S rRNA processing and 30S ribosomal subunit biogenesis and possibly also in cell cycle regulation and energy metabolism. The polypeptide is GTPase Era (Ruminiclostridium cellulolyticum (strain ATCC 35319 / DSM 5812 / JCM 6584 / H10) (Clostridium cellulolyticum)).